The sequence spans 620 residues: Eukaryotic translation initiation factor 2-alpha kinase 1 (620 aa).

The disordered stretch occupies residues 1–38; it reads MLGGGSVDGERDTDDDAAGAVAAPPAIDFPAEVSDPKY. Low complexity predominate over residues 18-28; sequence AGAVAAPPAID. The short motif at 85–104 is the SIFI-degron element; that stretch reads LHSKQVFKLLCQTFIKMGLL. A Protein kinase domain is found at 167 to 581; sequence FEELAILGKG…ALQLLQSELF (415 aa). ATP is bound by residues 173 to 181 and lysine 196; that span reads LGKGGYGRV. At threonine 283 the chain carries Phosphothreonine. The HRM 1 repeat unit spans residues 408 to 413; that stretch reads ACPYVM. Aspartate 440 (proton acceptor) is an active-site residue. Residues threonine 484 and threonine 486 each carry the phosphothreonine; by autocatalysis modification. Residue threonine 491 is modified to Phosphothreonine. The HRM 2 repeat unit spans residues 550-555; that stretch reads RCPVQA.

It belongs to the protein kinase superfamily. Ser/Thr protein kinase family. GCN2 subfamily. In terms of assembly, synthesized in an inactive form that binds to the N-terminal domain of CDC37. Has to be associated with a multiprotein complex containing Hsp90, CDC37 and PPP5C for maturation and activation by autophosphorylation. The phosphatase PPP5C modulates this activation. Homodimer; homodimerizes in presence of heme, forming a disulfide-linked inactive homodimer. Interacts with DELE1; binds both to full-length DELE1 and processed form of DELE1 (S-DELE1) in response to stress, leading to activate its protein kinase activity and trigger the integrated stress response (ISR). Post-translationally, activated by autophosphorylation; phosphorylated predominantly on serine and threonine residues, but also on tyrosine residues. Autophosphorylation at Thr-486 is required for kinase activation. The active autophosphorylated form apparently is largely refractory to cellular heme fluctuations. Ubiquitinated and degraded by the SIFI complex once the mitochondrial stress has been resolved, thereby providing stress response silencing. Within the SIFI complex, UBR4 initiates ubiquitin chain that are further elongated or branched by KCMF1.

The protein resides in the cytoplasm. It catalyses the reaction L-seryl-[protein] + ATP = O-phospho-L-seryl-[protein] + ADP + H(+). It carries out the reaction L-threonyl-[protein] + ATP = O-phospho-L-threonyl-[protein] + ADP + H(+). In normal conditions, the protein kinase activity is inhibited; inhibition is relieved by various stress conditions. Inhibited by heme: in presence of heme, forms a disulfide-linked inactive homodimer. Heme depletion relieves inhibition and stimulates kinase activity by autophosphorylation. Inhibited by the heme metabolites biliverdin and bilirubin. Induced by oxidative stress generated by arsenite treatment. Binding of nitric oxide (NO) to the heme iron in the N-terminal heme-binding domain activates the kinase activity, while binding of carbon monoxide (CO) suppresses kinase activity. Protein kinase activity is also activated upon binding to DELE1 in response to various stress, triggering the integrated stress response (ISR): activated by full-length DELE1 in response to iron deficiency, while it is activated by the processed form of DELE1 (S-DELE1) in response to mitochondrial stress. Functionally, metabolic-stress sensing protein kinase that phosphorylates the alpha subunit of eukaryotic translation initiation factor 2 (EIF2S1/eIF-2-alpha) in response to various stress conditions. Key activator of the integrated stress response (ISR) required for adaptation to various stress, such as heme deficiency, oxidative stress, osmotic shock, mitochondrial dysfunction and heat shock. EIF2S1/eIF-2-alpha phosphorylation in response to stress converts EIF2S1/eIF-2-alpha in a global protein synthesis inhibitor, leading to a global attenuation of cap-dependent translation, while concomitantly initiating the preferential translation of ISR-specific mRNAs, such as the transcriptional activator ATF4, and hence allowing ATF4-mediated reprogramming. Acts as a key sensor of heme-deficiency: in normal conditions, binds hemin via a cysteine thiolate and histidine nitrogenous coordination, leading to inhibit the protein kinase activity. This binding occurs with moderate affinity, allowing it to sense the heme concentration within the cell: heme depletion relieves inhibition and stimulates kinase activity, activating the ISR. Thanks to this unique heme-sensing capacity, plays a crucial role to shut off protein synthesis during acute heme-deficient conditions. In red blood cells (RBCs), controls hemoglobin synthesis ensuring a coordinated regulation of the synthesis of its heme and globin moieties. It thereby plays an essential protective role for RBC survival in anemias of iron deficiency. Iron deficiency also triggers activation by full-length DELE1. Also activates the ISR in response to mitochondrial dysfunction: HRI/EIF2AK1 protein kinase activity is activated upon binding to the processed form of DELE1 (S-DELE1), thereby promoting the ATF4-mediated reprogramming. Also acts as an activator of mitophagy in response to mitochondrial damage: catalyzes phosphorylation of eIF-2-alpha (EIF2S1) following activation by S-DELE1, thereby promoting mitochondrial localization of EIF2S1, triggering PRKN-independent mitophagy. The sequence is that of Eukaryotic translation initiation factor 2-alpha kinase 1 from Rattus norvegicus (Rat).